A 106-amino-acid polypeptide reads, in one-letter code: Nucleoid-associated protein Smlt1015 (106 aa).

A disordered region spans residues 81-106 (IDAESKSKMGSATAGMQLPPGMKLPF).

The protein belongs to the YbaB/EbfC family. As to quaternary structure, homodimer.

It is found in the cytoplasm. Its subcellular location is the nucleoid. Functionally, binds to DNA and alters its conformation. May be involved in regulation of gene expression, nucleoid organization and DNA protection. This is Nucleoid-associated protein Smlt1015 from Stenotrophomonas maltophilia (strain K279a).